The chain runs to 476 residues: MSLMIRSSYVSHITLFQPRNSKPSSFTNQISFLSSSNNNPFLNLVYKRNLTMQSVSKMTVKSSLIDPDGGELVELIVPETEIGVKKAESETMPKVKLNQIDLEWVHVISEGWASPLKGFMREDEYLQSLHFNSLRLKNGTFVNMSLPIVLAIDDDTKEQIGSSENVALVCPQGDIIGSLRSVEIYKHNKEERIARTWGTTSPGLPYVEEYITPSGNWLIGGDLEVFEPIKYNDGLDHYRLSPKQLREEFDNRQADAVFAFQLRNPVHNGHALLMNDTRKRLLEMGYKNPVLLLHPLGGFTKADDVPLDVRMEQHSKVLEDGVLDPKTTIVSIFPSPMHYAGPTEVQWHAKARINAGANFYIVGRDPAGMGHPTEKRDLYDPDHGKRVLSMAPGLEKLNILPFRVAAYDTIEKKMAFFDPSRAKEFLFISGTKMRTYARTGENPPDGFMCPSGWNVLVKYYESLQESEAKQQAVVSA.

A chloroplast-targeting transit peptide spans 1–56 (MSLMIRSSYVSHITLFQPRNSKPSSFTNQISFLSSSNNNPFLNLVYKRNLTMQSVS).

This sequence belongs to the sulfate adenylyltransferase family. Homotetramer. Mostly expressed in leaves or cotyledons.

Its subcellular location is the plastid. The protein resides in the chloroplast. The protein localises to the cytoplasm. It catalyses the reaction sulfate + ATP + H(+) = adenosine 5'-phosphosulfate + diphosphate. Its pathway is sulfur metabolism; hydrogen sulfide biosynthesis; sulfite from sulfate: step 1/3. This is ATP sulfurylase 2 (APS2) from Arabidopsis thaliana (Mouse-ear cress).